Here is a 254-residue protein sequence, read N- to C-terminus: Sec-independent protein translocase protein TatC (254 aa).

The next 6 membrane-spanning stretches (helical) occupy residues 40-60 (IFLS…FVKP), 82-104 (FFFV…FILY), 125-145 (VVLG…YALI), 172-192 (FVLL…IQVV), 210-230 (FVIL…DPLT), and 233-253 (LLAG…RLLG).

This sequence belongs to the TatC family. In terms of assembly, forms a complex with TatA.

The protein resides in the cell inner membrane. Its function is as follows. Part of the twin-arginine translocation (Tat) system that transports large folded proteins containing a characteristic twin-arginine motif in their signal peptide across membranes. The polypeptide is Sec-independent protein translocase protein TatC (Synechocystis sp. (strain ATCC 27184 / PCC 6803 / Kazusa)).